Reading from the N-terminus, the 320-residue chain is MIIVTGGAGFIGSNLVHELNRRGRTDVIVVDNLTRGEKALNLADCVIADYYDKDDFITLIEADEGLGPVEAVFHLGACSATTEWDGRYMMRNNFEYSRALFHWCQDRRIPFIYASSAAVYGGNSVFTEHPEHERPLNVYGYSKLAFDQYLRRYLDDLSAQVVGLRYFNVYGPREQHKGGMASVVHHFSRQLRESGQVRLFEGSDGYADGEQRRDFVDVSDCVRLKLWLLDHPEVSGIYNCGTGRARTFNAMAHAVIDWFGHGEIEYIPFPEHLKGRYQSYTQADLSQLRAAGCDLAFNDIETGVRNYLDAVADAPAVMPS.

NADP(+) is bound by residues 10–11, 31–32, K38, K53, 75–79, and N92; these read FI, DN, and LGACS. Y139 acts as the Proton acceptor in catalysis. Position 143 (K143) interacts with NADP(+). N168 is a substrate binding site. Positions 169 and 177 each coordinate NADP(+). K177 serves as the catalytic Proton acceptor. Substrate-binding positions include G179, H186, 200–203, R213, and Y277; that span reads FEGS.

This sequence belongs to the NAD(P)-dependent epimerase/dehydratase family. HldD subfamily. In terms of assembly, homopentamer. The cofactor is NADP(+).

The catalysed reaction is ADP-D-glycero-beta-D-manno-heptose = ADP-L-glycero-beta-D-manno-heptose. It participates in nucleotide-sugar biosynthesis; ADP-L-glycero-beta-D-manno-heptose biosynthesis; ADP-L-glycero-beta-D-manno-heptose from D-glycero-beta-D-manno-heptose 7-phosphate: step 4/4. Its function is as follows. Catalyzes the interconversion between ADP-D-glycero-beta-D-manno-heptose and ADP-L-glycero-beta-D-manno-heptose via an epimerization at carbon 6 of the heptose. The sequence is that of ADP-L-glycero-D-manno-heptose-6-epimerase from Alkalilimnicola ehrlichii (strain ATCC BAA-1101 / DSM 17681 / MLHE-1).